The following is a 411-amino-acid chain: Arginine deiminase (411 aa).

Residue C401 is the Amidino-cysteine intermediate of the active site.

The protein belongs to the arginine deiminase family.

It is found in the cytoplasm. The enzyme catalyses L-arginine + H2O = L-citrulline + NH4(+). It functions in the pathway amino-acid degradation; L-arginine degradation via ADI pathway; carbamoyl phosphate from L-arginine: step 1/2. In Staphylococcus aureus (strain JH9), this protein is Arginine deiminase.